The chain runs to 449 residues: Uric acid permease PucJ (449 aa).

The next 13 membrane-spanning stretches (helical) occupy residues 11-31 (LSLQ…LLVG), 41-61 (LSYL…LQTL), 67-87 (GIGL…MIAI), 91-111 (YGIH…FLFA), 119-139 (VLFP…SLVP), 158-178 (EYGS…ILVL), 191-211 (VLIG…VSFS), 229-249 (APAF…VIIV), 277-297 (AEGI…NTFA), 313-333 (IVVT…IAAL), 334-354 (ASAV…GMVI), 372-392 (LLTI…PGIF), and 401-421 (ILVS…NLFF).

Belongs to the nucleobase:cation symporter-2 (NCS2) (TC 2.A.40) family.

The protein localises to the cell membrane. Functionally, uptake of uric acid. This Bacillus subtilis (strain 168) protein is Uric acid permease PucJ (pucJ).